A 249-amino-acid chain; its full sequence is 2,3-bisphosphoglycerate-dependent phosphoglycerate mutase (249 aa).

Substrate-binding positions include 8–15 (RHGESVWN), 21–22 (TG), R60, 87–90 (ERHY), K98, 114–115 (RR), and 183–184 (GN). H9 (tele-phosphohistidine intermediate) is an active-site residue. E87 serves as the catalytic Proton donor/acceptor.

This sequence belongs to the phosphoglycerate mutase family. BPG-dependent PGAM subfamily.

The enzyme catalyses (2R)-2-phosphoglycerate = (2R)-3-phosphoglycerate. Its pathway is carbohydrate degradation; glycolysis; pyruvate from D-glyceraldehyde 3-phosphate: step 3/5. In terms of biological role, catalyzes the interconversion of 2-phosphoglycerate and 3-phosphoglycerate. The polypeptide is 2,3-bisphosphoglycerate-dependent phosphoglycerate mutase (Chloroherpeton thalassium (strain ATCC 35110 / GB-78)).